Reading from the N-terminus, the 384-residue chain is Protein Brevis radix-like 4 (384 aa).

Disordered regions lie at residues 1 to 35 and 50 to 78; these read MLTCIARSKRAGDESSGQPDDPDSKNAKSLTSQLK and PCTAAQGQGQGQGPIKNNPSSSSVKSDFE. The region spanning 150–205 is the BRX 1 domain; it reads KEWVAQVEPGVLITFVSLPGGGNDLKRIRFSRDMFNKLQAQRWWADNYDKVMELYN. 2 disordered regions span residues 214 to 270 and 304 to 325; these read FPLP…DHNS and SIRSSSSRDADRSEEMSVSNAS. Basic and acidic residues predominate over residues 221–235; sequence RSEDENAKVEYHPED. A compositionally biased stretch (polar residues) spans 260-270; that stretch reads YSSSDSLDHNS. Residues 309–318 show a composition bias toward basic and acidic residues; sequence SSRDADRSEE. One can recognise a BRX 2 domain in the interval 329–384; it reads NEWVEQDEPGVYITIKVLPGGKRELRRVRFSRERFGEMHARLWWEENRARIHEQYL.

This sequence belongs to the BRX family. As to expression, expressed in roots.

The protein localises to the nucleus. This chain is Protein Brevis radix-like 4 (BRXL4), found in Arabidopsis thaliana (Mouse-ear cress).